The sequence spans 298 residues: Mitochondrial intermembrane space import and assembly protein 40 (298 aa).

The N-terminal 33 residues, 1 to 33 (MYRTALRPSQSALRAIRSTTSPSALVSSGARRF), are a transit peptide targeting the mitochondrion. Over 34 to 52 (ASTTSAPKKKSTWKGAAVR) the chain is Mitochondrial matrix. The chain crosses the membrane as a helical; Signal-anchor for type II membrane protein span at residues 53–69 (WGLAVAAVYYYNTSPIF). Residues 70–298 (SDELPETAGT…TAANNNKKQQ (229 aa)) are Mitochondrial intermembrane-facing. Residues 101–159 (RQAAEHAAARKAAQAAAKAAATPATPSESVEEQITKAEAEAEAVPEGDSKPRSESTEGV) are disordered. A compositionally biased stretch (low complexity) spans 110-121 (RKAAQAAAKAAA). 3 cysteine pairs are disulfide-bonded: C191-C193, C202-C235, and C212-C225. Residues 199–243 (HGPCGEEFKAAFSCFVYSTEEPKGMDCIEKFSHMQDCFRKYPEVY) enclose the CHCH domain. 2 short sequence motifs (cx9C motif) span residues 202 to 212 (CGEEFKAAFSC) and 225 to 235 (CIEKFSHMQDC). The tract at residues 248–298 (ADDEEAERASAAAPAAEGTPAKEEPVENKKEEALEPATHDATAANNNKKQQ) is disordered. Over residues 256–266 (ASAAAPAAEGT) the composition is skewed to low complexity. Over residues 267–280 (PAKEEPVENKKEEA) the composition is skewed to basic and acidic residues.

Monomer. It depends on Cu(2+) as a cofactor. Requires Zn(2+) as cofactor.

The protein resides in the mitochondrion inner membrane. In terms of biological role, required for the import and folding of small cysteine-containing proteins (small Tim) in the mitochondrial intermembrane space (IMS). Forms a redox cycle with ERV1 that involves a disulfide relay system. Precursor proteins to be imported into the IMS are translocated in their reduced form into the mitochondria. The oxidized form of MIA40 forms a transient intermolecular disulfide bridge with the reduced precursor protein, resulting in oxidation of the precursor protein that now contains an intramolecular disulfide bond and is able to undergo folding in the IMS. This Neurospora crassa (strain ATCC 24698 / 74-OR23-1A / CBS 708.71 / DSM 1257 / FGSC 987) protein is Mitochondrial intermembrane space import and assembly protein 40 (mia-40).